The following is a 1588-amino-acid chain: Ubiquitin carboxyl-terminal hydrolase 54 (1588 aa).

R12 is subject to Omega-N-methylarginine. One can recognise a USP domain in the interval 31–352; sequence KGLSNEPGQN…QPLLLLYADP (322 aa). The active-site Nucleophile is C42. 12 residues coordinate Zn(2+): H67, C69, C74, C77, H133, C145, C150, H153, C166, C169, C225, and C229. The active-site Proton acceptor is the H302. Basic and acidic residues-rich tracts occupy residues 380–391 and 424–434; these read DSGHLTDSECNQ and SEGETLKEKQA. Disordered stretches follow at residues 380 to 447 and 459 to 519; these read DSGH…TSRL and HSRP…PTWR. S424 is subject to Phosphoserine. Polar residues-rich tracts occupy residues 436–445 and 459–471; these read RNASKSSSTS and HSRP…TNAA. Residues 499-512 show a composition bias toward low complexity; sequence TESTSSEARSSSSS. Phosphoserine is present on residues S574, S613, and S616. Over residues 601–616 the composition is skewed to low complexity; it reads ESGYESSERNSSSPVS. Residues 601 to 620 form a disordered region; it reads ESGYESSERNSSSPVSLDAA. Residues 678 to 712 adopt a coiled-coil conformation; the sequence is TSKSELDELQEEVARRAQEQELRKKREKELEAAKG. Disordered regions lie at residues 801–839, 856–895, 950–969, 1093–1172, and 1525–1562; these read RSLQ…EQSV, DSEL…SPPG, EDNS…TTQD, TRDV…SRRR, and GSVL…SAGE. Residues 808–825 show a composition bias toward low complexity; the sequence is QQQPPSQQPVQPSASLPS. Polar residues predominate over residues 878-895; it reads SLVSPSPAQSVSQHSPPG. Position 1138 is a phosphoserine (S1138). Over residues 1536–1547 the composition is skewed to basic and acidic residues; the sequence is RRIDVPPDDDGR.

Belongs to the peptidase C19 family.

It catalyses the reaction Thiol-dependent hydrolysis of ester, thioester, amide, peptide and isopeptide bonds formed by the C-terminal Gly of ubiquitin (a 76-residue protein attached to proteins as an intracellular targeting signal).. Its function is as follows. Deubiquitinase that specifically mediates 'Lys-63'-linked deubiquitination of substrates with a polyubiquitin chain composed of at least 3 ubiquitins. Specifically recognizes ubiquitin chain in position S2 and catalyzes cleavage of polyubiquitin within 'Lys-63'-linked chains. Not able to deubiquitinate substrates with shorter ubiquitin chains. Mediates deubiquitination of PLK4, maintaining PLK4 stability by reducing its ubiquitination-mediated degradation. This Rattus norvegicus (Rat) protein is Ubiquitin carboxyl-terminal hydrolase 54 (Usp54).